We begin with the raw amino-acid sequence, 296 residues long: Decaprenyl diphosphate synthase (296 aa).

The tract at residues 1–58 (MVRNERTLKSTDFPQLPPAPDDYPTFPDKSTWPVVFPMLPPSPDGGPRRPPQHTSKAV) is disordered. Asp-76 is an active-site residue. Asp-76 provides a ligand contact to Mg(2+). Substrate contacts are provided by residues 77 to 80 (GNGR), Trp-81, Arg-89, His-93, and 121 to 123 (STE). The active-site Proton acceptor is Asn-124. Substrate-binding positions include Trp-125, Arg-127, Arg-244, and 250 to 252 (RSS). Glu-263 is a binding site for Mg(2+).

The protein belongs to the UPP synthase family. In terms of assembly, homodimer. Mg(2+) is required as a cofactor.

The protein localises to the cell membrane. It carries out the reaction (2Z,6E)-farnesyl diphosphate + 7 isopentenyl diphosphate = (2Z,6Z,10Z,14Z,18Z,22Z,26Z,30Z,34E)-decaprenyl diphosphate + 7 diphosphate. The enzyme catalyses n isopentenyl diphosphate + (2E,6E)-farnesyl diphosphate = a di-trans,poly-cis-polyprenyl diphosphate + n diphosphate. Catalyzes the sequential condensation of isopentenyl diphosphate (IPP) in the cis configuration with (2Z,6E)-farnesyl diphosphate (Z-FPP or EZ-FPP) generating the 50 carbon product trans,polycis-decaprenyl diphosphate. When (2E,6E)-farnesyl diphosphate (E-FPP or EE-FPP) is used in vitro, both primary products decaprenyl diphosphate and (2E,6E,10E)-geranylgeranyl diphosphate (EEE-GGPP) are synthesized. M.tuberculosis does not synthesize (2E,6E,10Z)-geranylgeranyl diphosphate (EEZ-GGPP) and heptaprenyl diphosphate. Can also accept many different allylic substrates, including E-geranyl diphosphate (E-GPP), neryl diphosphate (NPP), and all-trans-geranyl-geranyl diphosphate. The protein is Decaprenyl diphosphate synthase (uppS) of Mycobacterium leprae (strain TN).